The primary structure comprises 916 residues: Protein translocase subunit SecA (916 aa).

ATP contacts are provided by residues Gln-87, 105 to 109 (GEGKT), and Asp-507. Zn(2+) contacts are provided by Cys-900, Cys-902, Cys-911, and His-912.

This sequence belongs to the SecA family. In terms of assembly, monomer and homodimer. Part of the essential Sec protein translocation apparatus which comprises SecA, SecYEG and auxiliary proteins SecDF-YajC and YidC. Requires Zn(2+) as cofactor.

The protein localises to the cell inner membrane. It is found in the cytoplasm. The enzyme catalyses ATP + H2O + cellular proteinSide 1 = ADP + phosphate + cellular proteinSide 2.. In terms of biological role, part of the Sec protein translocase complex. Interacts with the SecYEG preprotein conducting channel. Has a central role in coupling the hydrolysis of ATP to the transfer of proteins into and across the cell membrane, serving both as a receptor for the preprotein-SecB complex and as an ATP-driven molecular motor driving the stepwise translocation of polypeptide chains across the membrane. The protein is Protein translocase subunit SecA of Neisseria gonorrhoeae (strain ATCC 700825 / FA 1090).